The primary structure comprises 60 residues: Large ribosomal subunit protein bL32 (60 aa).

Residues Met-1–Arg-16 show a composition bias toward basic residues. Positions Met-1 to Ala-60 are disordered. Over residues Val-28–Leu-44 the composition is skewed to basic and acidic residues.

It belongs to the bacterial ribosomal protein bL32 family.

The sequence is that of Large ribosomal subunit protein bL32 from Chelativorans sp. (strain BNC1).